A 243-amino-acid polypeptide reads, in one-letter code: 7-carboxy-7-deazaguanine synthase (243 aa).

Substrate contacts are provided by residues 15–17 (IQG) and Arg30. Residues 21-239 (VIGQKTMFVR…PQLHTLLWGN (219 aa)) enclose the Radical SAM core domain. Cys34, Cys38, and Cys41 together coordinate [4Fe-4S] cluster. Ser43 contributes to the Mg(2+) binding site. Position 81 (Ser81) interacts with substrate. S-adenosyl-L-methionine is bound by residues Gly83 and 127-129 (SPK).

The protein belongs to the radical SAM superfamily. 7-carboxy-7-deazaguanine synthase family. Homodimer. [4Fe-4S] cluster serves as cofactor. S-adenosyl-L-methionine is required as a cofactor. It depends on Mg(2+) as a cofactor.

It carries out the reaction 6-carboxy-5,6,7,8-tetrahydropterin + H(+) = 7-carboxy-7-deazaguanine + NH4(+). It participates in purine metabolism; 7-cyano-7-deazaguanine biosynthesis. Catalyzes the complex heterocyclic radical-mediated conversion of 6-carboxy-5,6,7,8-tetrahydropterin (CPH4) to 7-carboxy-7-deazaguanine (CDG), a step common to the biosynthetic pathways of all 7-deazapurine-containing compounds. This chain is 7-carboxy-7-deazaguanine synthase, found in Bacillus subtilis (strain 168).